The sequence spans 322 residues: Ribose-phosphate pyrophosphokinase (322 aa).

ATP-binding positions include 43–45 (DGE) and 102–103 (RQ). 2 residues coordinate Mg(2+): histidine 137 and aspartate 177. The active site involves lysine 201. Residues arginine 203, aspartate 227, and 231–235 (DTAGT) contribute to the D-ribose 5-phosphate site.

Belongs to the ribose-phosphate pyrophosphokinase family. Class I subfamily. As to quaternary structure, homohexamer. Mg(2+) serves as cofactor.

It localises to the cytoplasm. It catalyses the reaction D-ribose 5-phosphate + ATP = 5-phospho-alpha-D-ribose 1-diphosphate + AMP + H(+). It functions in the pathway metabolic intermediate biosynthesis; 5-phospho-alpha-D-ribose 1-diphosphate biosynthesis; 5-phospho-alpha-D-ribose 1-diphosphate from D-ribose 5-phosphate (route I): step 1/1. Its function is as follows. Involved in the biosynthesis of the central metabolite phospho-alpha-D-ribosyl-1-pyrophosphate (PRPP) via the transfer of pyrophosphoryl group from ATP to 1-hydroxyl of ribose-5-phosphate (Rib-5-P). The protein is Ribose-phosphate pyrophosphokinase of Xylella fastidiosa (strain Temecula1 / ATCC 700964).